A 132-amino-acid chain; its full sequence is Small ribosomal subunit protein uS8 (132 aa).

The protein belongs to the universal ribosomal protein uS8 family. As to quaternary structure, part of the 30S ribosomal subunit. Contacts proteins S5 and S12.

In terms of biological role, one of the primary rRNA binding proteins, it binds directly to 16S rRNA central domain where it helps coordinate assembly of the platform of the 30S subunit. The sequence is that of Small ribosomal subunit protein uS8 from Gluconobacter oxydans (strain 621H) (Gluconobacter suboxydans).